An 88-amino-acid polypeptide reads, in one-letter code: Small ribosomal subunit protein bS20 (88 aa).

A disordered region spans residues 1–20 (MPNIKSAIKRTKTNNERRAH).

This sequence belongs to the bacterial ribosomal protein bS20 family.

Functionally, binds directly to 16S ribosomal RNA. In Bacillus velezensis (strain DSM 23117 / BGSC 10A6 / LMG 26770 / FZB42) (Bacillus amyloliquefaciens subsp. plantarum), this protein is Small ribosomal subunit protein bS20.